The chain runs to 310 residues: Probable manganese-dependent inorganic pyrophosphatase (310 aa).

Mn(2+) contacts are provided by His9, Asp13, Asp15, Asp75, His97, and Asp149.

Belongs to the PPase class C family. Requires Mn(2+) as cofactor.

Its subcellular location is the cytoplasm. It carries out the reaction diphosphate + H2O = 2 phosphate + H(+). This chain is Probable manganese-dependent inorganic pyrophosphatase, found in Bacillus cytotoxicus (strain DSM 22905 / CIP 110041 / 391-98 / NVH 391-98).